The sequence spans 223 residues: 2-phospho-L-lactate guanylyltransferase (223 aa).

It belongs to the CofC family. In terms of assembly, homodimer.

It carries out the reaction (2S)-2-phospholactate + GTP + H(+) = (2S)-lactyl-2-diphospho-5'-guanosine + diphosphate. It functions in the pathway cofactor biosynthesis; coenzyme F420 biosynthesis. Functionally, guanylyltransferase that catalyzes the activation of (2S)-2-phospholactate (2-PL) as (2S)-lactyl-2-diphospho-5'-guanosine, via the condensation of 2-PL with GTP. It is involved in the biosynthesis of coenzyme F420, a hydride carrier cofactor. In Methanothermobacter thermautotrophicus (strain ATCC 29096 / DSM 1053 / JCM 10044 / NBRC 100330 / Delta H) (Methanobacterium thermoautotrophicum), this protein is 2-phospho-L-lactate guanylyltransferase.